Consider the following 351-residue polypeptide: Dysbindin (351 aa).

Residues 106–179 adopt a coiled-coil conformation; that stretch reads FLADLECLTA…AELDAEHAQK (74 aa). Positions 291 to 325 are disordered; it reads RHKLSSLSSTCTDSASQEASEGESPVVQSDEEEVQ. Low complexity predominate over residues 295–306; it reads SSLSSTCTDSAS.

This sequence belongs to the dysbindin family. In terms of assembly, component of the biogenesis of lysosome-related organelles complex 1 (BLOC-1).

The protein localises to the cytoplasm. The protein resides in the cytoplasmic vesicle membrane. It is found in the cytoplasmic vesicle. It localises to the secretory vesicle. Its subcellular location is the synaptic vesicle membrane. The protein localises to the endosome membrane. The protein resides in the melanosome membrane. It is found in the nucleus. It localises to the postsynaptic density. Its subcellular location is the endoplasmic reticulum. Component of the BLOC-1 complex, a complex that is required for normal biogenesis of lysosome-related organelles (LRO), such as platelet dense granules and melanosomes. Plays a role in intracellular vesicle trafficking. Plays a role in synaptic vesicle trafficking and in neurotransmitter release. May be required for normal dopamine homeostasis in the cerebral cortex, hippocampus, and hypothalamus. Plays a role in the regulation of cell surface exposure of DRD2. Contributes to the regulation of dopamine signaling. May play a role in actin cytoskeleton reorganization and neurite outgrowth. The polypeptide is Dysbindin (DTNBP1) (Gallus gallus (Chicken)).